Consider the following 23-residue polypeptide: Caerin-4.1 (23 aa).

In terms of tissue distribution, expressed by the skin parotoid and/or rostral glands.

It localises to the secreted. Its function is as follows. Antibacterial peptide, that adopts an alpha helical conformation which can disrupt bacterial membranes. Each caerin displays a different antimicrobial specificity. The chain is Caerin-4.1 from Ranoidea caerulea (Green tree frog).